The primary structure comprises 537 residues: Glucose-6-phosphate isomerase (537 aa).

Catalysis depends on E355, which acts as the Proton donor. Residues H386 and K501 contribute to the active site.

This sequence belongs to the GPI family.

It is found in the cytoplasm. The enzyme catalyses alpha-D-glucose 6-phosphate = beta-D-fructose 6-phosphate. The protein operates within carbohydrate biosynthesis; gluconeogenesis. Its pathway is carbohydrate degradation; glycolysis; D-glyceraldehyde 3-phosphate and glycerone phosphate from D-glucose: step 2/4. Catalyzes the reversible isomerization of glucose-6-phosphate to fructose-6-phosphate. The protein is Glucose-6-phosphate isomerase of Protochlamydia amoebophila (strain UWE25).